We begin with the raw amino-acid sequence, 721 residues long: Polyribonucleotide nucleotidyltransferase (721 aa).

Mg(2+)-binding residues include aspartate 495 and aspartate 501. Residues 562 to 621 (PRLLSFRIDPELIGTVIGPGGRTIKGITERTNTKIDIEDGGIVTIASHDGAAAEEAQKII) enclose the KH domain. One can recognise an S1 motif domain in the interval 631–699 (GEIFSGVVTR…SRGRINLTLR (69 aa)). The disordered stretch occupies residues 701 to 721 (VGQNNGMSYPEPTPTPVAPLN). Residues 711–721 (EPTPTPVAPLN) are compositionally biased toward pro residues.

It belongs to the polyribonucleotide nucleotidyltransferase family. Requires Mg(2+) as cofactor.

The protein localises to the cytoplasm. The enzyme catalyses RNA(n+1) + phosphate = RNA(n) + a ribonucleoside 5'-diphosphate. Involved in mRNA degradation. Catalyzes the phosphorolysis of single-stranded polyribonucleotides processively in the 3'- to 5'-direction. In Prochlorococcus marinus (strain MIT 9215), this protein is Polyribonucleotide nucleotidyltransferase.